The following is a 61-amino-acid chain: MKGTPSFGKMNKSPTHVRCRRCGRNSFNVRKGYCAACGFGRSKKIRRYNWQNKKVNGLRLV.

Zn(2+) is bound by residues cysteine 19, cysteine 22, cysteine 34, and cysteine 37. Residues 19–37 (CRRCGRNSFNVRKGYCAAC) form a C4-type zinc finger.

The protein belongs to the eukaryotic ribosomal protein eL37 family. Zn(2+) serves as cofactor.

Binds to the 23S rRNA. The polypeptide is Large ribosomal subunit protein eL37 (rpl37e) (Sulfurisphaera tokodaii (strain DSM 16993 / JCM 10545 / NBRC 100140 / 7) (Sulfolobus tokodaii)).